A 58-amino-acid chain; its full sequence is MARYRRRSRSRSRSRYGRRRRRSRSRRRRSRRRRRRRGRRGRGYHRRSPHRRRRRRRR.

The interval 1–58 (MARYRRRSRSRSRSRYGRRRRRSRSRRRRSRRRRRRRGRRGRGYHRRSPHRRRRRRRR) is disordered.

Belongs to the protamine P1 family. As to expression, testis.

It is found in the nucleus. Its subcellular location is the chromosome. Protamines substitute for histones in the chromatin of sperm during the haploid phase of spermatogenesis. They compact sperm DNA into a highly condensed, stable and inactive complex. The polypeptide is Sperm protamine P1 (PRM1) (Monodelphis domestica (Gray short-tailed opossum)).